Consider the following 347-residue polypeptide: Peroxidase C2 (347 aa).

The N-terminal stretch at 1 to 24 (MHSSSSLIKLGFLLLLLNVSLSHA) is a signal peptide. Intrachain disulfides connect Cys35–Cys115, Cys68–Cys73, Cys121–Cys325, and Cys201–Cys233. The active-site Proton acceptor is His66. Asp67, Val70, Gly72, Asp74, and Ser76 together coordinate Ca(2+). Asn81 carries an N-linked (GlcNAc...) asparagine glycan. Pro163 contributes to the substrate binding site. His194 lines the heme b pocket. Thr195 is a binding site for Ca(2+). 2 N-linked (GlcNAc...) asparagine glycosylation sites follow: Asn210 and Asn238. Ca(2+) is bound by residues Asp246, Thr249, and Asp254.

Belongs to the peroxidase family. Classical plant (class III) peroxidase subfamily. The cofactor is Ca(2+). It depends on heme b as a cofactor.

It is found in the secreted. Its subcellular location is the vacuole. The enzyme catalyses 2 a phenolic donor + H2O2 = 2 a phenolic radical donor + 2 H2O. Functionally, removal of H(2)O(2), oxidation of toxic reductants, biosynthesis and degradation of lignin, suberization, auxin catabolism, response to environmental stresses such as wounding, pathogen attack and oxidative stress. These functions might be dependent on each isozyme/isoform in each plant tissue. The protein is Peroxidase C2 (PRXC2) of Armoracia rusticana (Horseradish).